Reading from the N-terminus, the 1040-residue chain is Multidrug resistance protein MdtB (1040 aa).

11 helical membrane passes run 15 to 37, 345 to 362, 367 to 389, 396 to 418, 438 to 460, 472 to 494, 535 to 557, 867 to 889, 909 to 931, 968 to 990, and 1000 to 1022; these read LFIMRPVATTLLMVAILLAGIIG, FELMMAIALVVMIIYLFL, ATIIPGVAVPLSLIGTFAVMVFL, LTLMALTIATGFVVDDAIVVIEN, GEIGFTIISLTFSLIAVLIPLLF, FAITLAVAILISAVVSLTLTPMM, HPWLTLSVALSTLLLSVLLWVFI, VWLIVAAVVAMYIVLGILYESFI, LMIAGSELDVIAIIGIILLIGIV, ILMTTLAALLGALPLMLSTGVGA, and MVGGLIVSQVLTLFTTPVIYLLF.

This sequence belongs to the resistance-nodulation-cell division (RND) (TC 2.A.6) family. MdtB subfamily. As to quaternary structure, part of a tripartite efflux system composed of MdtA, MdtB and MdtC. MdtB forms a heteromultimer with MdtC.

It is found in the cell inner membrane. The MdtABC tripartite complex confers resistance against novobiocin and deoxycholate. The protein is Multidrug resistance protein MdtB of Escherichia coli O157:H7.